An 86-amino-acid polypeptide reads, in one-letter code: Anti-adapter protein IraP (86 aa).

Residues 1-36 (MKNLIAELLFKLAQKEEESKELCAQVEALEIIVTAM) are a coiled coil.

It belongs to the IraP family. As to quaternary structure, interacts with RssB.

The protein resides in the cytoplasm. Functionally, inhibits RpoS proteolysis by regulating RssB activity, thereby increasing the stability of the sigma stress factor RpoS especially during phosphate starvation, but also in stationary phase and during nitrogen starvation. Its effect on RpoS stability is due to its interaction with RssB, which probably blocks the interaction of RssB with RpoS, and the consequent delivery of the RssB-RpoS complex to the ClpXP protein degradation pathway. The polypeptide is Anti-adapter protein IraP (Escherichia coli O127:H6 (strain E2348/69 / EPEC)).